A 303-amino-acid polypeptide reads, in one-letter code: Vesicle-trafficking protein SEC22c (303 aa).

Residues 1 to 183 (MSVIFFACVV…EPAPNFRMEP (183 aa)) lie on the Cytoplasmic side of the membrane. The 112-residue stretch at 8-119 (CVVRVRDGLP…YAFLEFDSII (112 aa)) folds into the Longin domain. The chain crosses the membrane as a helical span at residues 184–204 (VTALGILSLILNIMCAALNLI). The Lumenal portion of the chain corresponds to 205–223 (RGVHLAEHSLQVAHEEIGN). A helical membrane pass occupies residues 224-244 (ILAFLVPFVACIFQCYLYLFY). Residues 245 to 248 (SPAR) are Cytoplasmic-facing. Residues 249–269 (TMKVVLMLLFICLGNMYLHGL) form a helical membrane-spanning segment. Residue arginine 270 is a topological domain, lumenal. The chain crosses the membrane as a helical span at residues 271 to 291 (NLWQILFHIGVAFLSSYQILT). The Cytoplasmic portion of the chain corresponds to 292 to 303 (RQLQEKQSDCGV).

It belongs to the synaptobrevin family. In terms of tissue distribution, ubiquitously expressed.

It localises to the endoplasmic reticulum membrane. Functionally, may be involved in vesicle transport between the ER and the Golgi complex. The polypeptide is Vesicle-trafficking protein SEC22c (SEC22C) (Homo sapiens (Human)).